Here is a 210-residue protein sequence, read N- to C-terminus: uncharacterized protein (210 aa).

This is an uncharacterized protein from Fowl adenovirus A serotype 1 (strain CELO / Phelps) (FAdV-1).